The primary structure comprises 378 residues: Erythronate-4-phosphate dehydrogenase (378 aa).

The substrate site is built by Ser-45 and Thr-66. Positions 146 and 175 each coordinate NAD(+). Residue Arg-208 is part of the active site. Asp-232 provides a ligand contact to NAD(+). Residue Glu-237 is part of the active site. The Proton donor role is filled by His-254. Gly-257 contributes to the NAD(+) binding site. Residue Tyr-258 coordinates substrate.

It belongs to the D-isomer specific 2-hydroxyacid dehydrogenase family. PdxB subfamily. As to quaternary structure, homodimer.

It is found in the cytoplasm. The enzyme catalyses 4-phospho-D-erythronate + NAD(+) = (R)-3-hydroxy-2-oxo-4-phosphooxybutanoate + NADH + H(+). It participates in cofactor biosynthesis; pyridoxine 5'-phosphate biosynthesis; pyridoxine 5'-phosphate from D-erythrose 4-phosphate: step 2/5. In terms of biological role, catalyzes the oxidation of erythronate-4-phosphate to 3-hydroxy-2-oxo-4-phosphonooxybutanoate. This is Erythronate-4-phosphate dehydrogenase from Escherichia coli O81 (strain ED1a).